A 174-amino-acid chain; its full sequence is Probable N-acetyltransferase Rv2775 (174 aa).

The N-acetyltransferase domain maps to 6–172; the sequence is IRIRAAKPID…VGYRLYRSAP (167 aa).

This sequence belongs to the acetyltransferase family.

The chain is Probable N-acetyltransferase Rv2775 from Mycobacterium tuberculosis (strain ATCC 25618 / H37Rv).